The chain runs to 72 residues: Translation initiation factor IF-1 (72 aa).

Residues 1–72 enclose the S1-like domain; that stretch reads MSKNDVIEVE…TRGRIVYRFK (72 aa).

Belongs to the IF-1 family. As to quaternary structure, component of the 30S ribosomal translation pre-initiation complex which assembles on the 30S ribosome in the order IF-2 and IF-3, IF-1 and N-formylmethionyl-tRNA(fMet); mRNA recruitment can occur at any time during PIC assembly.

The protein localises to the cytoplasm. Functionally, one of the essential components for the initiation of protein synthesis. Stabilizes the binding of IF-2 and IF-3 on the 30S subunit to which N-formylmethionyl-tRNA(fMet) subsequently binds. Helps modulate mRNA selection, yielding the 30S pre-initiation complex (PIC). Upon addition of the 50S ribosomal subunit IF-1, IF-2 and IF-3 are released leaving the mature 70S translation initiation complex. This is Translation initiation factor IF-1 from Desulforamulus reducens (strain ATCC BAA-1160 / DSM 100696 / MI-1) (Desulfotomaculum reducens).